Here is a 32-residue protein sequence, read N- to C-terminus: Islet amyloid polypeptide (32 aa).

It belongs to the calcitonin family. In terms of assembly, can form homodimers. Interacts with IDE and INS. Interaction with INS inhibits homodimerization and fibril formation.

Its subcellular location is the secreted. In terms of biological role, amylin/IAPP is a glucoregulatory peptide hormone that plays an important role in the regulation of energy homeostasis. Selectively inhibits insulin-stimulated glucose utilization and glycogen deposition in muscle, while not affecting adipocyte glucose metabolism. IAPP function is mediated by the CALCR-RAMPs (AMYRs) receptor complexes. Amylin can also bind CALCR receptor in the absence of RAMPs, although it is more selective for AMYRs. The protein is Islet amyloid polypeptide (IAPP) of Saguinus oedipus (Cotton-top tamarin).